Here is a 200-residue protein sequence, read N- to C-terminus: Pyridoxine/pyridoxamine 5'-phosphate oxidase (200 aa).

Residues 48–53 (RMVLLK), 63–64 (YT), Lys-70, and Gln-92 contribute to the FMN site. Lys-53 is a substrate binding site. Tyr-110, Arg-114, and Ser-118 together coordinate substrate. FMN-binding positions include 127–128 (QS) and Trp-171. Residue 177–179 (RLH) coordinates substrate. Arg-181 is a binding site for FMN.

Belongs to the pyridoxamine 5'-phosphate oxidase family. In terms of assembly, homodimer. FMN is required as a cofactor.

It carries out the reaction pyridoxamine 5'-phosphate + O2 + H2O = pyridoxal 5'-phosphate + H2O2 + NH4(+). The catalysed reaction is pyridoxine 5'-phosphate + O2 = pyridoxal 5'-phosphate + H2O2. It functions in the pathway cofactor metabolism; pyridoxal 5'-phosphate salvage; pyridoxal 5'-phosphate from pyridoxamine 5'-phosphate: step 1/1. Its pathway is cofactor metabolism; pyridoxal 5'-phosphate salvage; pyridoxal 5'-phosphate from pyridoxine 5'-phosphate: step 1/1. In terms of biological role, catalyzes the oxidation of either pyridoxine 5'-phosphate (PNP) or pyridoxamine 5'-phosphate (PMP) into pyridoxal 5'-phosphate (PLP). This chain is Pyridoxine/pyridoxamine 5'-phosphate oxidase, found in Cereibacter sphaeroides (strain ATCC 17023 / DSM 158 / JCM 6121 / CCUG 31486 / LMG 2827 / NBRC 12203 / NCIMB 8253 / ATH 2.4.1.) (Rhodobacter sphaeroides).